Reading from the N-terminus, the 231-residue chain is Acyltransferase PGAP2 (231 aa).

Topologically, residues 1–22 are cytoplasmic; it reads MQQVPYGSVDRDKPLIRVPFTR. Residues 23-43 form a helical membrane-spanning segment; sequence LAVITVCLPLLGLVACIVLAM. The Lumenal segment spans residues 44 to 78; the sequence is LYHYNDATYTHCQVPNYLPSISAAISLTPERYIWR. A helical membrane pass occupies residues 79-99; it reads FSIGLHSAPRFLVAAAYLSFY. At 100 to 110 the chain is on the cytoplasmic side; sequence RGRFSRRLTEQ. The helical transmembrane segment at 111 to 131 threads the bilayer; sequence LLSGFTFLLALSENVGLLLLT. Over 132 to 146 the chain is Lumenal; it reads YVSSTETYSVHKSGF. A helical membrane pass occupies residues 147–167; that stretch reads ILFIGSSLFHMLCTCKLWSLI. The Cytoplasmic portion of the chain corresponds to 168-179; sequence VKYSISSEEMMS. A helical membrane pass occupies residues 180–200; that stretch reads YWFKLRLFLFNGGCCVLAVYF. Topologically, residues 201 to 231 are lumenal; the sequence is YRRHNTYCEEGITHASRCVSIWWCCPTWPST.

This sequence belongs to the PGAP2 family.

The protein resides in the golgi apparatus membrane. Its function is as follows. Involved in the fatty acid remodeling steps of GPI-anchor maturation where the unsaturated acyl chain at sn-2 of inositol phosphate is replaced by a saturated stearoyl chain. May catalyze the second step of the fatty acid remodeling, by reacylating a lyso-GPI intermediate at sn-2 of inositol phosphate by a saturated chain. The fatty acid remodeling steps is critical for the integration of GPI-APs into lipid rafts. This Danio rerio (Zebrafish) protein is Acyltransferase PGAP2.